The primary structure comprises 718 residues: Pullulanase (718 aa).

Asp-406 acts as the Nucleophile in catalysis. Residue Glu-435 is the Proton donor of the active site.

It belongs to the glycosyl hydrolase 13 family.

The catalysed reaction is Hydrolysis of (1-&gt;6)-alpha-D-glucosidic linkages in pullulan, amylopectin and glycogen, and in the alpha- and beta-limit dextrins of amylopectin and glycogen.. The protein is Pullulanase (amyX) of Bacillus subtilis (strain 168).